Reading from the N-terminus, the 262-residue chain is Probable proteasome subunit beta type-7 (262 aa).

This sequence belongs to the peptidase T1B family. In terms of assembly, the 26S proteasome consists of a 20S proteasome core and two 19S regulatory subunits. The 20S proteasome core is composed of 28 subunits that are arranged in four stacked rings, resulting in a barrel-shaped structure. The two end rings are each formed by seven alpha subunits, and the two central rings are each formed by seven beta subunits. The catalytic chamber with the active sites is on the inside of the barrel.

The protein localises to the cytoplasm. The protein resides in the nucleus. In terms of biological role, non-catalytic component of the proteasome, a multicatalytic proteinase complex which is characterized by its ability to cleave peptides with Arg, Phe, Tyr, Leu, and Glu adjacent to the leaving group at neutral or slightly basic pH. The proteasome has an ATP-dependent proteolytic activity. In Schizosaccharomyces pombe (strain 972 / ATCC 24843) (Fission yeast), this protein is Probable proteasome subunit beta type-7.